The sequence spans 406 residues: Anthranilate 1,2-dioxygenase system ferredoxin--NAD(+) reductase component (406 aa).

An FAD-binding site is contributed by 5–37 (PFVIVGAGHAARRTAEALRARDADAPIVMIGAE). Residue 152-161 (GGGFIGLEVA) coordinates NAD(+).

It belongs to the FAD-dependent oxidoreductase family. As to quaternary structure, part of a multicomponent enzyme system composed of a reductase (AndAa), a ferredoxin (AndAb) and a two-subunit oxygenase component (AndAc and AndAd). Requires FAD as cofactor.

The catalysed reaction is 2 reduced [2Fe-2S]-[ferredoxin] + NAD(+) + H(+) = 2 oxidized [2Fe-2S]-[ferredoxin] + NADH. The protein operates within aromatic compound metabolism; anthranilate degradation via hydroxylation; catechol from anthranilate: step 1/1. In terms of biological role, part of the multicomponent anthranilate dioxygenase, that converts anthranilate to catechol. Probably transfers electrons from ferredoxin (AndAb) to NADH. The protein is Anthranilate 1,2-dioxygenase system ferredoxin--NAD(+) reductase component of Burkholderia cepacia (Pseudomonas cepacia).